The following is a 167-amino-acid chain: MSTPENDQADGPRMRRGRRLAVDVGDARIGVASCDPDGILATPVETVPGRDVPAAHRRLRQLVAEYEPIEVVVGLPRSLKGGEGPAAAKVRRFTQELAKGIAPVPVRLVDERMTTVTASQGLRASGVKSKKGRSVIDQAAAVIILQQALESERVSGRPPGEGVEVVI.

It belongs to the YqgF nuclease family.

Its subcellular location is the cytoplasm. Its function is as follows. Could be a nuclease involved in processing of the 5'-end of pre-16S rRNA. The polypeptide is Putative pre-16S rRNA nuclease (Streptomyces coelicolor (strain ATCC BAA-471 / A3(2) / M145)).